Here is an 86-residue protein sequence, read N- to C-terminus: Toxin Tpa4 (86 aa).

An N-terminal signal peptide occupies residues 1–19 (MNYFVLIAVACLLTAGTES). Positions 21–82 (KDGYPLEYDN…EPIKTSGRCR (62 aa)) constitute an LCN-type CS-alpha/beta domain. Cystine bridges form between C31–C81, C35–C57, C43–C64, and C47–C66. Proline amide is present on P83.

Belongs to the long (4 C-C) scorpion toxin superfamily. Sodium channel inhibitor family. Alpha subfamily. In terms of tissue distribution, expressed by the venom gland.

The protein localises to the secreted. Its function is as follows. Alpha toxins bind voltage-independently at site-3 of sodium channels (Nav) and inhibit the inactivation of the activated channels, thereby blocking neuronal transmission. The sequence is that of Toxin Tpa4 from Tityus pachyurus (Colombian scorpion).